Consider the following 411-residue polypeptide: Replication factor C subunit 2 (411 aa).

Residues 1 to 36 (MADFFNLKARQQAAAQASSSKTPTSKQESNRLQPWV) are disordered. Low complexity predominate over residues 11 to 27 (QQAAAQASSSKTPTSKQ). ATP contacts are provided by residues V36, R40, 73 to 81 (GPPGTGKTS), N195, and R253.

This sequence belongs to the activator 1 small subunits family. As to quaternary structure, heteropentamer of subunits RFC1, RFC2, RFC3, RFC4 and RFC5 that forms a complex with PCNA in the presence of ATP.

The protein localises to the nucleus. Functionally, the elongation of primed DNA templates by DNA polymerase delta and epsilon requires the action of the accessory proteins proliferating cell nuclear antigen (PCNA) and activator 1. Subunit 2 binds ATP and single-stranded DNA. This chain is Replication factor C subunit 2 (RFC2), found in Phaeosphaeria nodorum (strain SN15 / ATCC MYA-4574 / FGSC 10173) (Glume blotch fungus).